We begin with the raw amino-acid sequence, 270 residues long: Glucosamine-6-phosphate deaminase (270 aa).

Aspartate 68 serves as the catalytic Proton acceptor; for enolization step. Aspartate 145 serves as the catalytic For ring-opening step. Residue histidine 147 is the Proton acceptor; for ring-opening step of the active site. The active-site For ring-opening step is glutamate 152.

Belongs to the glucosamine/galactosamine-6-phosphate isomerase family. NagB subfamily.

It catalyses the reaction alpha-D-glucosamine 6-phosphate + H2O = beta-D-fructose 6-phosphate + NH4(+). The protein operates within amino-sugar metabolism; N-acetylneuraminate degradation; D-fructose 6-phosphate from N-acetylneuraminate: step 5/5. In terms of biological role, catalyzes the reversible isomerization-deamination of glucosamine 6-phosphate (GlcN6P) to form fructose 6-phosphate (Fru6P) and ammonium ion. This is Glucosamine-6-phosphate deaminase from Bifidobacterium longum subsp. infantis (strain ATCC 15697 / DSM 20088 / JCM 1222 / NCTC 11817 / S12).